We begin with the raw amino-acid sequence, 86 residues long: Elongation factor 1-beta (86 aa).

Belongs to the EF-1-beta/EF-1-delta family.

Promotes the exchange of GDP for GTP in EF-1-alpha/GDP, thus allowing the regeneration of EF-1-alpha/GTP that could then be used to form the ternary complex EF-1-alpha/GTP/AAtRNA. The sequence is that of Elongation factor 1-beta from Methanocorpusculum labreanum (strain ATCC 43576 / DSM 4855 / Z).